The following is a 56-amino-acid chain: uncharacterized protein (56 aa).

Residues 30 to 52 (IKIGIICVIITWAIFSINHHHTI) traverse the membrane as a helical segment.

Its subcellular location is the membrane. This is an uncharacterized protein from Dictyostelium discoideum (Social amoeba).